Consider the following 310-residue polypeptide: UDP-N-acetylenolpyruvoylglucosamine reductase (310 aa).

One can recognise an FAD-binding PCMH-type domain in the interval 35-199; it reads VGGPAQALFT…TSARFRGTPA (165 aa). Residue Arg179 is part of the active site. Ser228 (proton donor) is an active-site residue. Residue Glu298 is part of the active site.

The protein belongs to the MurB family. FAD serves as cofactor.

It is found in the cytoplasm. The catalysed reaction is UDP-N-acetyl-alpha-D-muramate + NADP(+) = UDP-N-acetyl-3-O-(1-carboxyvinyl)-alpha-D-glucosamine + NADPH + H(+). Its pathway is cell wall biogenesis; peptidoglycan biosynthesis. Its function is as follows. Cell wall formation. The sequence is that of UDP-N-acetylenolpyruvoylglucosamine reductase from Rhodopseudomonas palustris (strain BisB5).